The primary structure comprises 56 residues: Alpha-conotoxin EpI (56 aa).

The first 16 residues, 1 to 16, serve as a signal peptide directing secretion; the sequence is MFTVFLLVVLATTVVS. The propeptide occupies 17–39; sequence FTSDRASDSRKDAASGLIALTIK. 2 disulfides stabilise this stretch: Cys41–Cys47 and Cys42–Cys55. Residues 43–45 form a ser-Xaa-Pro motif, crucial for potent interaction with nAChR region; it reads SDP. The residue at position 54 (Tyr54) is a Sulfotyrosine. Cys55 carries the post-translational modification Cysteine amide.

This sequence belongs to the conotoxin A superfamily. Both tyrosine sulfation and C-terminal amidation are important for activity and structure stability. As to expression, expressed by the venom duct.

It localises to the secreted. In terms of biological role, alpha-conotoxins act on postsynaptic membranes, they bind to the nicotinic acetylcholine receptors (nAChR) and thus inhibit them. This native peptide blocks mammalian nicotinic acetylcholine receptors composed of alpha-3-beta-2/CHRNA3-CHRNB2 and alpha-3-beta-4/CHRNA3-CHRNB4 subunits. The protein is Alpha-conotoxin EpI of Conus episcopatus (Bishop's cone).